The following is a 592-amino-acid chain: Threonine--tRNA ligase (592 aa).

Residues 193–488 (DHRKLGPALG…LIEHYGGAFP (296 aa)) are catalytic. Zn(2+) contacts are provided by cysteine 284, histidine 335, and histidine 465.

The protein belongs to the class-II aminoacyl-tRNA synthetase family. In terms of assembly, homodimer. Zn(2+) serves as cofactor.

Its subcellular location is the cytoplasm. It carries out the reaction tRNA(Thr) + L-threonine + ATP = L-threonyl-tRNA(Thr) + AMP + diphosphate + H(+). Its function is as follows. Catalyzes the attachment of threonine to tRNA(Thr) in a two-step reaction: L-threonine is first activated by ATP to form Thr-AMP and then transferred to the acceptor end of tRNA(Thr). Also edits incorrectly charged L-seryl-tRNA(Thr). This Treponema pallidum (strain Nichols) protein is Threonine--tRNA ligase.